A 121-amino-acid polypeptide reads, in one-letter code: Small ribosomal subunit protein bS16m (121 aa).

Belongs to the bacterial ribosomal protein bS16 family. Component of the mitochondrial small ribosomal subunit (mt-SSU). Mature yeast 74S mitochondrial ribosomes consist of a small (37S) and a large (54S) subunit. The 37S small subunit contains a 15S ribosomal RNA (15S mt-rRNA) and 34 different proteins. The 54S large subunit contains a 21S rRNA (21S mt-rRNA) and 46 different proteins.

The protein resides in the mitochondrion. Component of the mitochondrial ribosome (mitoribosome), a dedicated translation machinery responsible for the synthesis of mitochondrial genome-encoded proteins, including at least some of the essential transmembrane subunits of the mitochondrial respiratory chain. The mitoribosomes are attached to the mitochondrial inner membrane and translation products are cotranslationally integrated into the membrane. In Saccharomyces cerevisiae (strain ATCC 204508 / S288c) (Baker's yeast), this protein is Small ribosomal subunit protein bS16m (MRPS16).